Reading from the N-terminus, the 431-residue chain is O-Mevalon transferase macI (431 aa).

An N-linked (GlcNAc...) asparagine glycan is attached at Asn-176. The next 4 helical transmembrane spans lie at 198 to 218 (IYAL…AILM), 301 to 321 (LLMM…YQVT), 336 to 356 (YFAL…VLGI), and 404 to 424 (LFAA…NFVA).

It belongs to the wax synthase family.

It localises to the membrane. It participates in secondary metabolite biosynthesis; terpenoid biosynthesis. O-Mevalon transferase; part of the gene cluster that mediates the biosynthesis of macrophorins, isoprenoid epoxycyclohexenones containing cyclized drimane moieties. The first step of the pathway is the synthesis of 6-methylsalicylic acid (6-MSA) by the polyketide synthase macA. 6-MSA is then converted to m-cresol by the decarboxylase macB. The cytochrome P450 monooxygenase macC then catalyzes the oxidation of m-cresol to toluquinol. Epoxidation of toluquinol is then performed by the short chain dehydrogenase macD, with the help of macE, and a further prenylation by macG leads to 7-deacetoxyyanuthone A. The next step is the hydroxylation of C-22 of 7-deacetoxyyanuthone A by the cytochrome P450 monooxygenase macH to yield 22-deacetylyanuthone A. O-Mevalon transferase macI then attaches mevalon to the hydroxyl group of 22-deacetylyanuthone A to produce yanuthone E. The terpene cyclase macJ catalyzes the cyclization of 22-deacetylyanuthone A to macrophorin A. MacJ is also able to catalyze cyclization of yanuthone E and 7-deacetoxyyanuthone A to their corresponding macrophorins. The macJ products can be further modified by macH and macJ, as well as by the FAD-dependent monooxygenase macF, to produce additional macrophorins, including 4'-oxomacrophorin A, 4'-oxomacrophorin D and 4'-oxomacrophorin E. The chain is O-Mevalon transferase macI from Penicillium terrestre.